A 461-amino-acid chain; its full sequence is Ribonuclease inhibitor (461 aa).

S2 is modified (N-acetylserine). The 2 X 5 AA tandem repeats of S-L-D-I-Q stretch occupies residues 2–11 (SLDIQSLDIQ). LRR repeat units follow at residues 20–48 (WAEL…CKDI), 49–76 (SSAL…VHCV), 77–105 (LQGL…CGVL), 106–133 (SSTL…LQLL), 134–162 (CEGL…CEPL), 163–190 (ASVL…VRVL), 191–219 (CQGL…CRDL), 220–247 (CGIV…MAEL), 248–276 (CPGL…CGDL), 277–304 (CRVL…ARLL), 305–333 (CETL…CSHF), 334–361 (SSVL…VREL), 362–390 (CQGL…CSSL), 391–418 (AATL…ILQL), and 419–447 (VESV…EDRL). T82 carries the post-translational modification Phosphothreonine. S91 is subject to Phosphoserine.

As to quaternary structure, forms high-affinity heterodimers with RNASE1, ANG and RNASE2. In terms of processing, the N-terminus is blocked. Post-translationally, at least 30 of the 32 cysteine residues are in the reduced form.

It is found in the cytoplasm. The protein localises to the nucleus. In terms of biological role, ribonuclease inhibitor which inhibits RNASE1, RNASE2 and angiogenin (ANG). May play a role in redox homeostasis. Required to inhibit the cytotoxic tRNA ribonuclease activity of ANG in the cytoplasm in absence of stress. Relocates to the nucleus in response to stress, relieving inhibition of ANG in the cytoplasm, and inhibiting the angiogenic activity of ANG in the nucleus. This is Ribonuclease inhibitor from Homo sapiens (Human).